Here is a 174-residue protein sequence, read N- to C-terminus: Protein COFACTOR ASSEMBLY OF COMPLEX C SUBUNIT B CCB3, chloroplastic (174 aa).

The transit peptide at 1–39 directs the protein to the chloroplast; that stretch reads MTTVTTSFVSFSPALMIFQKKSRRSSPNFRNRSTSLPIV. Residues 40–78 are Lumenal-facing; it reads SATLSHIEEAATTTNLIRQTNSISESLRNISLADLDPGT. Residues 79–99 form a helical membrane-spanning segment; it reads AKLAIGILGPALSAFGFLFIL. The Stromal portion of the chain corresponds to 100 to 147; it reads RIVMSWYPKLPVDKFPYVLAYAPTEPILVQTRKVIPPLAGVDVTPVVW. The helical transmembrane segment at 148-168 threads the bilayer; it reads FGLVSFLSEILVGPQGLLVLV. At 169 to 174 the chain is on the lumenal side; the sequence is SQQQVN.

The protein belongs to the YggT family.

The protein localises to the plastid. Its subcellular location is the chloroplast thylakoid membrane. Its function is as follows. Required for the biogenesis and accumulation of native cytochrome b6 in the thylakoid membrane. Controls the conversion of apocytochrome b6 to holocytochrome b6. Required for covalent binding of the c-type heme to cytochrome b6. This Arabidopsis thaliana (Mouse-ear cress) protein is Protein COFACTOR ASSEMBLY OF COMPLEX C SUBUNIT B CCB3, chloroplastic.